We begin with the raw amino-acid sequence, 302 residues long: Methionyl-tRNA formyltransferase (302 aa).

(6S)-5,6,7,8-tetrahydrofolate is bound at residue 106–109 (SVLP).

The protein belongs to the Fmt family.

It carries out the reaction L-methionyl-tRNA(fMet) + (6R)-10-formyltetrahydrofolate = N-formyl-L-methionyl-tRNA(fMet) + (6S)-5,6,7,8-tetrahydrofolate + H(+). Attaches a formyl group to the free amino group of methionyl-tRNA(fMet). The formyl group appears to play a dual role in the initiator identity of N-formylmethionyl-tRNA by promoting its recognition by IF2 and preventing the misappropriation of this tRNA by the elongation apparatus. The sequence is that of Methionyl-tRNA formyltransferase from Hydrogenobaculum sp. (strain Y04AAS1).